The chain runs to 365 residues: c-di-GMP synthase (365 aa).

It belongs to the CD-NTase family. E subfamily.

The catalysed reaction is 2 GTP = 3',3'-c-di-GMP + 2 diphosphate. Cyclic nucleotide synthase (second messenger synthase) of a CBASS antivirus system. CBASS (cyclic oligonucleotide-based antiphage signaling system) provides immunity against bacteriophage. The CD-NTase protein synthesizes cyclic nucleotides in response to infection; these serve as specific second messenger signals. The signals activate a diverse range of effectors, leading to bacterial cell death and thus abortive phage infection. A type I-D(GG) CBASS system. Its function is as follows. Cyclic dinucleotide synthase that catalyzes the synthesis of c-di-GMP, has no activity with other NTP substrates. In Flavobacteriaceae sp. genome_bin_11, this protein is c-di-GMP synthase.